Here is a 705-residue protein sequence, read N- to C-terminus: MEDQRKYGAYGTPQKYDPTFKGPIYNRGCTDVLCCVLLFLAIVGYVAVGLIAWTHGDPRKVIYPTDSRGEFCGQKGTKNANKPFLFYFNIVKCASPLVLLEFQCPTPQICVEKCPNRYLTLLNAWNTPEFEYYKQFCVPDFQKNKKGVAQVLRDGQCPAVLIPSKPLAQRCFPDIHAHKGVIMVGNATTYEDGHGSRKNITELVEGAKQANGILEARQLAMRIFEDYTVSWYWIVIGLVIAMVLSLLFIILLRFLAGIMVWVMIVLVILVLGYGIFHCYMEYARLRGEAGSDISVLDLGFQTDFRVYLHLRQTWLAFMIILSILEVIIILLLIFLRKRILIAIALIKEASRAVGYVMCSLLYPLVTFFLLCLCIAYWASTAVFLSTSNEAVYKILGDSSCPHQGQTCHPETFFNSTEAHACPNARCQFAFYGGESGYHRALLGLQIFNAFMFFWLANFVLALGQVTLAGAFASYYWALRKPDDMPAFPLFAAFGRALRYHTGSLAFGSLILAIVQIIRVILEYLDQRLKAAENKFAKFLMTCLKCCFWCLEKFIKFLNRNAYIMIAIYGTNFCTSARNAFFLLMRNIIRVAVLDKVTDFLFLLGKLLIVGSVGILAFFFFTHRIRIVQDTAPPLNYYWVPILTVIVGSYLIAHGFFSVYGMCVDTLFLCFLEDLERNNGSSERPYFMSSTLKKLLNKTNKKPVES.

The Cytoplasmic portion of the chain corresponds to 1–31 (MEDQRKYGAYGTPQKYDPTFKGPIYNRGCTD). Residue Thr12 is modified to Phosphothreonine. Residues 32–52 (VLCCVLLFLAIVGYVAVGLIA) form a helical membrane-spanning segment. Residues 53–231 (WTHGDPRKVI…RIFEDYTVSW (179 aa)) are Extracellular-facing. N-linked (GlcNAc...) asparagine glycosylation is found at Asn186 and Asn199. The chain crosses the membrane as a helical span at residues 232–252 (YWIVIGLVIAMVLSLLFIILL). The Cytoplasmic portion of the chain corresponds to 253–255 (RFL). Residues 256-276 (AGIMVWVMIVLVILVLGYGIF) form a helical membrane-spanning segment. Topologically, residues 277 to 314 (HCYMEYARLRGEAGSDISVLDLGFQTDFRVYLHLRQTW) are extracellular. The chain crosses the membrane as a helical span at residues 315 to 335 (LAFMIILSILEVIIILLLIFL). At 336-363 (RKRILIAIALIKEASRAVGYVMCSLLYP) the chain is on the cytoplasmic side. A helical membrane pass occupies residues 364-384 (LVTFFLLCLCIAYWASTAVFL). Topologically, residues 385-455 (STSNEAVYKI…IFNAFMFFWL (71 aa)) are extracellular. Asn414 carries an N-linked (GlcNAc...) asparagine glycan. The chain crosses the membrane as a helical span at residues 456 to 478 (ANFVLALGQVTLAGAFASYYWAL). The Cytoplasmic segment spans residues 479–503 (RKPDDMPAFPLFAAFGRALRYHTGS). The helical transmembrane segment at 504-524 (LAFGSLILAIVQIIRVILEYL) threads the bilayer. The Extracellular portion of the chain corresponds to 525–562 (DQRLKAAENKFAKFLMTCLKCCFWCLEKFIKFLNRNAY). Residues 563 to 583 (IMIAIYGTNFCTSARNAFFLL) traverse the membrane as a helical segment. Over 584 to 598 (MRNIIRVAVLDKVTD) the chain is Cytoplasmic. Residues 599–619 (FLFLLGKLLIVGSVGILAFFF) form a helical membrane-spanning segment. At 620-637 (FTHRIRIVQDTAPPLNYY) the chain is on the extracellular side. The helical transmembrane segment at 638-658 (WVPILTVIVGSYLIAHGFFSV) threads the bilayer. Over 659–705 (YGMCVDTLFLCFLEDLERNNGSSERPYFMSSTLKKLLNKTNKKPVES) the chain is Cytoplasmic.

The protein belongs to the CTL (choline transporter-like) family. In terms of assembly, interacts with COCH. N-glycosylated; contains sialic acid. Not O-glycosylated. In terms of tissue distribution, expressed at high levels in lung, colon and in supporting cells of the inner ear (at protein level). Progressively lower levels in brain, tongue, liver and kidney (at protein level). In the tongue, strongly expressed in epithelial cells and in nerves within the musculature. Within the nerves, expression observed in the perineurial cells of the nerve sheath, in the Schwann cells and myelinated nerve fibers (at protein level). In the kidney, prominent expression in glomeruli in the lining of Bowman's capsule and on the mesangial cells adjacent to the vessels within the glomerulus (at protein level). Strongly expressed on the membranes of splenocytes (at protein level).

It is found in the cell membrane. Its subcellular location is the mitochondrion outer membrane. The enzyme catalyses choline(out) + n H(+)(in) = choline(in) + n H(+)(out). It carries out the reaction ethanolamine(out) + n H(+)(in) = ethanolamine(in) + n H(+)(out). Its function is as follows. Choline/H+ antiporter, mainly in mitochodria. Also acts as a low-affinity ethanolamine/H+ antiporter, regulating the supply of extracellular ethanolamine (Etn) for the CDP-Etn pathway, redistribute intracellular Etn and balance the CDP-Cho and CDP-Etn arms of the Kennedy pathway. In Cavia porcellus (Guinea pig), this protein is Choline transporter-like protein 2 (SLC44A2).